The primary structure comprises 20 residues: SIPLPSLNFEQFGNMIQCTI.

It belongs to the phospholipase A2 family. Group I subfamily. Heterotrimer of alpha, beta and gamma chains, each related to PLA2. Glycosylated. Expressed by the venom gland.

The protein localises to the secreted. Its function is as follows. Heterotrimer: Snake venom phospholipase A2 (PLA2) that has presynaptic neurotoxicity. Inhibits nerve-evoked twitch contractions but not responses to cholinergic agonists acetylcholine and carbachol and to depolarizing agonist KCl. Causes a fade in tetanic contractions. Displays a triphasic mode of action with depression, enhancement and blockade of neurotransmission. Does not display myotoxic activity such as changes in baseline muscle tension or inhibition of directly stimulated muscle twitches. All subunits are necessary for maximum toxicity. In terms of biological role, monomer: the gamma chain has no significant enzymatic activity and is not toxic by itself. The protein is Phospholipase A2 homolog P-elapitoxin-Aa1a gamma chain of Acanthophis antarcticus (Common death adder).